Reading from the N-terminus, the 218-residue chain is Ras-related protein Rab-27B (218 aa).

Residue threonine 2 is modified to N-acetylthreonine. Residue 16 to 24 (GDSGVGKTT) participates in GTP binding. The Effector region motif lies at 38–46 (FITTVGIDF). GTP-binding positions include 74 to 78 (DTAGQ), 133 to 136 (NKAD), and 163 to 165 (SAA). Cysteines 123 and 188 form a disulfide. Positions 193–218 (HIPDTVNGSSSGKLDGEKSAEKKCAC) are disordered. The segment covering 206 to 218 (LDGEKSAEKKCAC) has biased composition (basic and acidic residues). S-geranylgeranyl cysteine attachment occurs at residues cysteine 216 and cysteine 218. The residue at position 218 (cysteine 218) is a Cysteine methyl ester.

Belongs to the small GTPase superfamily. Rab family. In terms of assembly, interacts with SYTL2, SYTL4, MYRIP and MLPH. Interacts with RPH3A and RPH3A. Interacts (GDP-bound form preferentially) with DENND10. Expressed at an extraordinary high level (0.1% of total protein) in urothelium.

The protein localises to the membrane. It localises to the late endosome. It catalyses the reaction GTP + H2O = GDP + phosphate + H(+). With respect to regulation, regulated by guanine nucleotide exchange factors (GEFs) which promote the exchange of bound GDP for free GTP, GTPase activating proteins (GAPs) which increase the GTP hydrolysis activity, and GDP dissociation inhibitors which inhibit the dissociation of the nucleotide from the GTPase. Activated by GEFs such as DENND10. Small GTPase which cycles between active GTP-bound and inactive GDP-bound states. In its active state, binds to a variety of effector proteins to regulate homeostasis of late endocytic pathway, including endosomal positioning, maturation and secretion. Plays a role in NTRK2/TRKB axonal anterograde transport by facilitating the association of NTRK2/TRKB with KLC1. May be involved in targeting uroplakins to urothelial apical membranes. The sequence is that of Ras-related protein Rab-27B (RAB27B) from Bos taurus (Bovine).